The primary structure comprises 301 residues: tRNA pseudouridine synthase B (301 aa).

Aspartate 38 functions as the Nucleophile in the catalytic mechanism.

Belongs to the pseudouridine synthase TruB family. Type 1 subfamily.

The catalysed reaction is uridine(55) in tRNA = pseudouridine(55) in tRNA. In terms of biological role, responsible for synthesis of pseudouridine from uracil-55 in the psi GC loop of transfer RNAs. This chain is tRNA pseudouridine synthase B, found in Clostridioides difficile (strain 630) (Peptoclostridium difficile).